Here is a 608-residue protein sequence, read N- to C-terminus: Alpha-1,3-galactosidase A (608 aa).

Positions 1-21 (MQRRTFIKSISAMMATSTTLG) are cleaved as a signal peptide. Cys22 carries the N-palmitoyl cysteine lipid modification. Residue Cys22 is the site of S-diacylglycerol cysteine attachment. PbH1 repeat units follow at residues 262-292 (TKNT…KLDN), 318-340 (KGHV…NVHG), 426-448 (PDHV…LLTV), 449-470 (SGKI…KIGS), and 481-507 (VESV…DIVP).

This sequence belongs to the glycosyl hydrolase 110 family. A subfamily.

The protein resides in the cell membrane. It carries out the reaction Hydrolysis of terminal, non-reducing branched (1-&gt;3)-alpha-D-galactosidic residues, producing free D-galactose.. The enzyme catalyses Hydrolysis of terminal, non-reducing alpha-D-galactose residues in alpha-D-galactosides, including galactose oligosaccharides, galactomannans and galactolipids.. Its function is as follows. Alpha-galactosidase that specifically removes branched alpha-1,3-linked galactose residues present in blood group B antigens. Has no activity toward linear alpha-1,3-linked galactose residues. This is Alpha-1,3-galactosidase A (glaA) from Shewanella woodyi (strain ATCC 51908 / MS32).